A 62-amino-acid chain; its full sequence is Alpha-conotoxin Vt1.27 (62 aa).

The N-terminal stretch at 1–21 (MGMRMMFTVFLLVVLATTVVS) is a signal peptide. The propeptide occupies 22–40 (FTLDRASDGASAAADLVAR). Disulfide bonds link C46–C52 and C47–C61.

Belongs to the conotoxin A superfamily. As to expression, expressed by the venom duct.

The protein localises to the secreted. Its function is as follows. The short (45-61) amidated synthetic peptide inhibits the rat neuronal alpha-3-beta-2/CHRNA3-CHRNB2 nicotinic acetylcholine receptor (nAChR) (IC(50)=1.16 uM). It also inhibits Cav2.2/CACNA1C voltage-gated calcium channel (IC(50)=398 nM). In vivo, when tested in rat pain models, this short amidated peptide increases the pain threshold. The polypeptide is Alpha-conotoxin Vt1.27 (Conus planorbis (Planorbis cone)).